A 134-amino-acid polypeptide reads, in one-letter code: Ribonuclease VapC40 (134 aa).

Residues 3–126 (APDTSVLVAG…LRAVETYERL (124 aa)) form the PINc domain. Mg(2+) contacts are provided by Asp-5 and Asp-98.

Belongs to the PINc/VapC protein family. Requires Mg(2+) as cofactor.

Toxic component of a type II toxin-antitoxin (TA) system. An RNase. Its cognate antitoxin is VapB40. The protein is Ribonuclease VapC40 of Mycobacterium tuberculosis (strain CDC 1551 / Oshkosh).